Reading from the N-terminus, the 351-residue chain is Phosphoribosylformylglycinamidine cyclo-ligase (351 aa).

Belongs to the AIR synthase family.

Its subcellular location is the cytoplasm. The enzyme catalyses 2-formamido-N(1)-(5-O-phospho-beta-D-ribosyl)acetamidine + ATP = 5-amino-1-(5-phospho-beta-D-ribosyl)imidazole + ADP + phosphate + H(+). It functions in the pathway purine metabolism; IMP biosynthesis via de novo pathway; 5-amino-1-(5-phospho-D-ribosyl)imidazole from N(2)-formyl-N(1)-(5-phospho-D-ribosyl)glycinamide: step 2/2. In Burkholderia pseudomallei (strain 668), this protein is Phosphoribosylformylglycinamidine cyclo-ligase.